A 130-amino-acid polypeptide reads, in one-letter code: Calcitonin gene-related peptide 2 (130 aa).

Residues 1-26 (MDFWKFFPFLALSTIWVLCLASSLQA) form the signal peptide. Positions 27-82 (APFRSALESSLDLGTLGDQEKHLLLAALMQDYEQMKARKLEQEEQETKGSRVTAQK) are excised as a propeptide. The cysteines at positions 85 and 90 are disulfide-linked. At Phe120 the chain carries Phenylalanine amide. Residues 127 to 130 (DLQA) constitute a propeptide that is removed on maturation.

It belongs to the calcitonin family. Detected in nerve cells of cerebrum, hippocampus and pons/midbrain in newborns, and only in nerve cells of pons/midbrain in adult.

It is found in the secreted. Functionally, CALCB/CGRP2 is a peptide hormone that induces vasodilation mediated by the CALCRL-RAMP1 receptor complex. Dilates a variety of vessels including the coronary, cerebral and systemic vasculature. Its abundance in the CNS also points toward a neurotransmitter or neuromodulator role. The polypeptide is Calcitonin gene-related peptide 2 (Mus musculus (Mouse)).